A 380-amino-acid chain; its full sequence is Phthiodiolone/phenolphthiodiolone dimycocerosates ketoreductase (380 aa).

The protein belongs to the mer family. Phthiodiolone/phenolphthiodiolone dimycocerosates ketoreductase subfamily.

Functionally, catalyzes the reduction of the keto moiety of phthiodiolone dimycocerosates (DIM B) and glycosylated phenolphthiodiolone dimycocerosates to form the intermediate compounds phthiotriol and glycosylated phenolphthiotriol dimycocerosates during phthiocerol dimycocerosates (DIM A) and glycosylated phenolphthiocerol dimycocerosates (PGL) biosynthesis. The polypeptide is Phthiodiolone/phenolphthiodiolone dimycocerosates ketoreductase (Mycobacterium sp. (strain JLS)).